A 675-amino-acid chain; its full sequence is INO80 complex subunit D (675 aa).

Disordered regions lie at residues 1–39 (MNNN…NVNQ), 183–203 (TGNN…NSTP), 274–324 (LKQK…ERQV), 473–523 (DSNK…KLNK), and 627–675 (VPVT…TMIS). Composition is skewed to low complexity over residues 282–318 (QQLQ…QLQI), 482–519 (NNDN…NNNN), and 634–648 (NQNN…TNNS). Residues 664–675 (EILKDSDNTMIS) are compositionally biased toward basic and acidic residues.

The protein belongs to the INO80D family. In terms of assembly, component of the chromatin-remodeling INO80 complex.

It localises to the nucleus. Functionally, putative regulatory component of the chromatin remodeling INO80 complex which is involved in transcriptional regulation, DNA replication and probably DNA repair. The protein is INO80 complex subunit D of Dictyostelium discoideum (Social amoeba).